A 170-amino-acid polypeptide reads, in one-letter code: Adenine phosphoribosyltransferase (170 aa).

This sequence belongs to the purine/pyrimidine phosphoribosyltransferase family. Homodimer.

It is found in the cytoplasm. It carries out the reaction AMP + diphosphate = 5-phospho-alpha-D-ribose 1-diphosphate + adenine. It participates in purine metabolism; AMP biosynthesis via salvage pathway; AMP from adenine: step 1/1. Its function is as follows. Catalyzes a salvage reaction resulting in the formation of AMP, that is energically less costly than de novo synthesis. The polypeptide is Adenine phosphoribosyltransferase (Cenarchaeum symbiosum (strain A)).